Consider the following 331-residue polypeptide: F-box protein At2g26160 (331 aa).

An F-box domain is found at 4–52 (PEWSELPGDLINLTANRFSSISDVLRVRSICKPWRSAAATPKSFQCNLP).

The polypeptide is F-box protein At2g26160 (Arabidopsis thaliana (Mouse-ear cress)).